The primary structure comprises 418 residues: Glutamyl-tRNA reductase (418 aa).

Substrate-binding positions include 49–52 (TCNR), serine 107, 112–114 (EPQ), and glutamine 118. The active-site Nucleophile is the cysteine 50. 187–192 (GAGETI) is an NADP(+) binding site.

Belongs to the glutamyl-tRNA reductase family. Homodimer.

It carries out the reaction (S)-4-amino-5-oxopentanoate + tRNA(Glu) + NADP(+) = L-glutamyl-tRNA(Glu) + NADPH + H(+). Its pathway is porphyrin-containing compound metabolism; protoporphyrin-IX biosynthesis; 5-aminolevulinate from L-glutamyl-tRNA(Glu): step 1/2. Catalyzes the NADPH-dependent reduction of glutamyl-tRNA(Glu) to glutamate 1-semialdehyde (GSA). The protein is Glutamyl-tRNA reductase of Vibrio campbellii (strain ATCC BAA-1116).